Reading from the N-terminus, the 195-residue chain is Peptidyl-tRNA hydrolase (195 aa).

Residue tyrosine 17 participates in tRNA binding. Residue histidine 22 is the Proton acceptor of the active site. TRNA is bound by residues phenylalanine 68, asparagine 70, and asparagine 116.

It belongs to the PTH family. As to quaternary structure, monomer.

The protein localises to the cytoplasm. The catalysed reaction is an N-acyl-L-alpha-aminoacyl-tRNA + H2O = an N-acyl-L-amino acid + a tRNA + H(+). In terms of biological role, hydrolyzes ribosome-free peptidyl-tRNAs (with 1 or more amino acids incorporated), which drop off the ribosome during protein synthesis, or as a result of ribosome stalling. Catalyzes the release of premature peptidyl moieties from peptidyl-tRNA molecules trapped in stalled 50S ribosomal subunits, and thus maintains levels of free tRNAs and 50S ribosomes. The sequence is that of Peptidyl-tRNA hydrolase from Erwinia tasmaniensis (strain DSM 17950 / CFBP 7177 / CIP 109463 / NCPPB 4357 / Et1/99).